The primary structure comprises 250 residues: 5'-nucleotidase SurE (250 aa).

A divalent metal cation-binding residues include aspartate 9, aspartate 10, serine 40, and asparagine 92.

It belongs to the SurE nucleotidase family. The cofactor is a divalent metal cation.

It localises to the cytoplasm. It carries out the reaction a ribonucleoside 5'-phosphate + H2O = a ribonucleoside + phosphate. Its function is as follows. Nucleotidase that shows phosphatase activity on nucleoside 5'-monophosphates. The protein is 5'-nucleotidase SurE of Idiomarina loihiensis (strain ATCC BAA-735 / DSM 15497 / L2-TR).